Here is a 251-residue protein sequence, read N- to C-terminus: uncharacterized protein (251 aa).

This is an uncharacterized protein from Methanocaldococcus jannaschii (strain ATCC 43067 / DSM 2661 / JAL-1 / JCM 10045 / NBRC 100440) (Methanococcus jannaschii).